The sequence spans 327 residues: o-succinylbenzoate synthase (327 aa).

K110 acts as the Proton donor in catalysis. Mg(2+) contacts are provided by D138, E165, and D188. The active-site Proton acceptor is K212.

Belongs to the mandelate racemase/muconate lactonizing enzyme family. MenC type 1 subfamily. Requires a divalent metal cation as cofactor.

The catalysed reaction is (1R,6R)-6-hydroxy-2-succinyl-cyclohexa-2,4-diene-1-carboxylate = 2-succinylbenzoate + H2O. It participates in quinol/quinone metabolism; 1,4-dihydroxy-2-naphthoate biosynthesis; 1,4-dihydroxy-2-naphthoate from chorismate: step 4/7. It functions in the pathway quinol/quinone metabolism; menaquinone biosynthesis. Converts 2-succinyl-6-hydroxy-2,4-cyclohexadiene-1-carboxylate (SHCHC) to 2-succinylbenzoate (OSB). This is o-succinylbenzoate synthase from Mycobacterium ulcerans (strain Agy99).